The following is a 369-amino-acid chain: MRAGIENYIKNIEQSLELIWRSLDIESLTIRLTELEELTADPSLWNNNANAQILLREKTNIEEKLNVFNNLKSNFEDILELEAMAEVENDFETLNQIEQDFKKLSIIAAKLETECLFSDESDYNNCFLEINAGAGGTESHDWASIMMRMYLRFAERLGFKTQIINMINGEEVGIKSCTIRIIGKRAYGWFKTEAGVHRLVRISPFNAAGKRMTSFASSWVYPEIDDDIAITIEDKDLRIDTFRASGAGGQHVNTTDSAVRITHIPTNTVTQCQSDRSQHKNKAQAMKMLQAKLYKLEMQKRTDSVDKQNANKTDNSWGHQIRSYVLQPYQIVKDLRTDYETSDTKGVLDGNLENFVSASLAMNASGNKK.

Glutamine 250 bears the N5-methylglutamine mark.

It belongs to the prokaryotic/mitochondrial release factor family. Methylated by PrmC. Methylation increases the termination efficiency of RF2.

Its subcellular location is the cytoplasm. In terms of biological role, peptide chain release factor 2 directs the termination of translation in response to the peptide chain termination codons UGA and UAA. This is Peptide chain release factor 2 (prfB) from Rickettsia typhi (strain ATCC VR-144 / Wilmington).